Reading from the N-terminus, the 1048-residue chain is Bifunctional heparan sulfate N-deacetylase/N-sulfotransferase (1048 aa).

Over 1 to 172 (MTISGGNQHN…RRCFGINVRR (172 aa)) the chain is Cytoplasmic. Residues 173 to 192 (CVLALLAITMVSIFYYTHYV) traverse the membrane as a helical; Signal-anchor for type II membrane protein segment. Residues 192–752 (VDTGVFNGLI…VRHKKIWSKT (561 aa)) form a heparan sulfate N-deacetylase region. The Lumenal portion of the chain corresponds to 193 to 1048 (DTGVFNGLIQ…WLKDDLSTGT (856 aa)). Residues Asn-388 and Asn-555 are each glycosylated (N-linked (GlcNAc...) asparagine). Residues 753–1048 (KNCDSLPKFL…WLKDDLSTGT (296 aa)) form a heparan sulfate N-sulfotransferase region. Catalysis depends on Lys-768, which acts as the For sulfotransferase activity. 768–772 (KTGTT) is a 3'-phosphoadenylyl sulfate binding site. A glycan (N-linked (GlcNAc...) asparagine) is linked at Asn-823. Ser-877 contacts 3'-phosphoadenylyl sulfate. Residue Asn-892 is glycosylated (N-linked (GlcNAc...) asparagine). The cysteines at positions 983 and 993 are disulfide-linked. Position 998 to 1002 (998 to 1002 (KGRQY)) interacts with 3'-phosphoadenylyl sulfate.

The protein belongs to the sulfotransferase 1 family. NDST subfamily. In terms of assembly, monomer.

Its subcellular location is the golgi apparatus membrane. It carries out the reaction alpha-D-glucosaminyl-[heparan sulfate](n) + 3'-phosphoadenylyl sulfate = N-sulfo-alpha-D-glucosaminyl-[heparan sulfate](n) + adenosine 3',5'-bisphosphate + 2 H(+). It functions in the pathway glycan metabolism; heparan sulfate biosynthesis. It participates in glycan metabolism; heparin biosynthesis. Functionally, essential bifunctional enzyme that catalyzes both the N-deacetylation and the N-sulfation of glucosamine (GlcNAc) of the glycosaminoglycan in heparan sulfate. Modifies the GlcNAc-GlcA disaccharide repeating sugar backbone to make N-sulfated heparosan, a prerequisite substrate for later modifications in heparin biosynthesis. Plays a role in diffusion of morphogen wingless (wg) via its role in heparan sulfate proteoglycans (HSPGs) biosynthesis, HSPGs being required for movement of wg morphogens. Required for wg signaling during both embryonic and imaginal disk development. Also required for FGF receptor signaling. This chain is Bifunctional heparan sulfate N-deacetylase/N-sulfotransferase (sfl), found in Drosophila melanogaster (Fruit fly).